The sequence spans 90 residues: Probable Fe(2+)-trafficking protein (90 aa).

This sequence belongs to the Fe(2+)-trafficking protein family.

In terms of biological role, could be a mediator in iron transactions between iron acquisition and iron-requiring processes, such as synthesis and/or repair of Fe-S clusters in biosynthetic enzymes. This Pseudomonas aeruginosa (strain UCBPP-PA14) protein is Probable Fe(2+)-trafficking protein.